Reading from the N-terminus, the 132-residue chain is MSMTDPIADLLVRIKNAAAVGKQTVKLPSSKIKVAIAQVLKDEGYITDLRVTQAENNKAELEIVLKYFEGRPVIETLKRFSRSGLRQYRGKTELPKVLGGLGIAIISTSKGIMTDAQAREAGVGGEVLCFVA.

It belongs to the universal ribosomal protein uS8 family. In terms of assembly, part of the 30S ribosomal subunit. Contacts proteins S5 and S12.

Its function is as follows. One of the primary rRNA binding proteins, it binds directly to 16S rRNA central domain where it helps coordinate assembly of the platform of the 30S subunit. The protein is Small ribosomal subunit protein uS8 of Xanthomonas axonopodis pv. citri (strain 306).